Here is a 353-residue protein sequence, read N- to C-terminus: A-kinase anchor protein 7 isoforms delta and gamma (353 aa).

2 stretches are compositionally biased toward basic and acidic residues: residues 1–22 (MERPAAGEIDANKCDHLSRGEE) and 66–76 (RSKENRGDRND). 2 disordered regions span residues 1 to 33 (MERPAAGEIDANKCDHLSRGEEGTGDLETSPVG) and 47 to 85 (DDCGLPDVPQGNVPQGNPKRSKENRGDRNDHVKKRKKAK). AMP-binding positions include T134 and 224-226 (HLT). Residues T134 and 224–226 (HLT) contribute to the CMP site. Positions 299-353 (AELVRLSKRLVENAVLKAVQQYLEETQNKKQPGEGNSVKAEEGDRNGDGSDNNRK) are PKA-RII-alpha subunit binding domain. Residues 300–324 (ELVRLSKRLVENAVLKAVQQYLEET) are RI-alpha-binding. Positions 301–314 (LVRLSKRLVENAVL) are RII-binding. The interval 321–353 (LEETQNKKQPGEGNSVKAEEGDRNGDGSDNNRK) is disordered. A compositionally biased stretch (basic and acidic residues) spans 337-353 (KAEEGDRNGDGSDNNRK).

Binds cAMP-dependent protein kinase (PKA). Interacts with PRKCA; only the cytoplasmic form is capable of interacting with PRKCA. As to expression, expressed highly in the heart, and moderately in brain, lung, liver, kidney and testis. Hardly detectable in spleen and skeletal muscle. In kidney, isoform Delta is expressed in the principal cells of the IMCD.

It is found in the nucleus. Its subcellular location is the cytoplasm. The protein resides in the cell membrane. Functionally, probably targets cAMP-dependent protein kinase (PKA) to the cellular membrane or cytoskeletal structures. The membrane-associated form reduces epithelial sodium channel (ENaC) activity, whereas the free cytoplasmic form may negatively regulate ENaC channel feedback inhibition by intracellular sodium. Isoform Delta may be involved in shuttling aquaporin-2 (AQP2) to the plasma membrane. This chain is A-kinase anchor protein 7 isoforms delta and gamma, found in Rattus norvegicus (Rat).